Here is a 450-residue protein sequence, read N- to C-terminus: Tubulin alpha chain (450 aa).

Residues Gln11, Glu71, Ser140, Gly144, Thr145, Thr179, Asn206, and Asn228 each coordinate GTP. Glu71 contacts Mg(2+). Glu254 is an active-site residue.

The protein belongs to the tubulin family. In terms of assembly, dimer of alpha and beta chains. A typical microtubule is a hollow water-filled tube with an outer diameter of 25 nm and an inner diameter of 15 nM. Alpha-beta heterodimers associate head-to-tail to form protofilaments running lengthwise along the microtubule wall with the beta-tubulin subunit facing the microtubule plus end conferring a structural polarity. Microtubules usually have 13 protofilaments but different protofilament numbers can be found in some organisms and specialized cells. Mg(2+) is required as a cofactor.

The protein localises to the cytoplasm. Its subcellular location is the cytoskeleton. The enzyme catalyses GTP + H2O = GDP + phosphate + H(+). Functionally, tubulin is the major constituent of microtubules, a cylinder consisting of laterally associated linear protofilaments composed of alpha- and beta-tubulin heterodimers. Microtubules grow by the addition of GTP-tubulin dimers to the microtubule end, where a stabilizing cap forms. Below the cap, tubulin dimers are in GDP-bound state, owing to GTPase activity of alpha-tubulin. This chain is Tubulin alpha chain, found in Zymoseptoria tritici (Speckled leaf blotch fungus).